Reading from the N-terminus, the 161-residue chain is 2-C-methyl-D-erythritol 2,4-cyclodiphosphate synthase (161 aa).

A divalent metal cation is bound by residues Asp-10 and His-12. 4-CDP-2-C-methyl-D-erythritol 2-phosphate-binding positions include 10 to 12 and 36 to 37; these read DVH and HS. A divalent metal cation is bound at residue His-44. 4-CDP-2-C-methyl-D-erythritol 2-phosphate-binding positions include 58–60, 63–67, and Arg-144; these read DIG and FSDTD.

This sequence belongs to the IspF family. In terms of assembly, homotrimer. Requires a divalent metal cation as cofactor.

It carries out the reaction 4-CDP-2-C-methyl-D-erythritol 2-phosphate = 2-C-methyl-D-erythritol 2,4-cyclic diphosphate + CMP. The protein operates within isoprenoid biosynthesis; isopentenyl diphosphate biosynthesis via DXP pathway; isopentenyl diphosphate from 1-deoxy-D-xylulose 5-phosphate: step 4/6. Functionally, involved in the biosynthesis of isopentenyl diphosphate (IPP) and dimethylallyl diphosphate (DMAPP), two major building blocks of isoprenoid compounds. Catalyzes the conversion of 4-diphosphocytidyl-2-C-methyl-D-erythritol 2-phosphate (CDP-ME2P) to 2-C-methyl-D-erythritol 2,4-cyclodiphosphate (ME-CPP) with a corresponding release of cytidine 5-monophosphate (CMP). The sequence is that of 2-C-methyl-D-erythritol 2,4-cyclodiphosphate synthase from Burkholderia cenocepacia (strain HI2424).